Consider the following 447-residue polypeptide: Glyceraldehyde-3-phosphate dehydrogenase GAPB, chloroplastic (447 aa).

The transit peptide at 1-80 (MATHAALAVS…STPVRGETVA (80 aa)) directs the protein to the chloroplast. NADP(+) is bound by residues 91–92 (RI), Asp-115, and Arg-160. Residues 234–236 (SCT), Thr-265, Arg-280, 293–294 (TG), and Arg-316 contribute to the D-glyceraldehyde 3-phosphate site. Cys-235 functions as the Nucleophile in the catalytic mechanism. Asn-399 is an NADP(+) binding site.

It belongs to the glyceraldehyde-3-phosphate dehydrogenase family. In terms of assembly, tetramer of either four A chains (GAPDH 2) or two A and two B chains (GAPDH 1). As to expression, expressed in leaves and stems.

It is found in the plastid. The protein localises to the chloroplast membrane. It localises to the chloroplast stroma. It catalyses the reaction D-glyceraldehyde 3-phosphate + phosphate + NADP(+) = (2R)-3-phospho-glyceroyl phosphate + NADPH + H(+). It participates in carbohydrate biosynthesis; Calvin cycle. Involved in the photosynthetic reductive pentose phosphate pathway (Calvin-Benson cycle). Catalyzes the reduction of 1,3-diphosphoglycerate by NADPH. The protein is Glyceraldehyde-3-phosphate dehydrogenase GAPB, chloroplastic (GAPB) of Arabidopsis thaliana (Mouse-ear cress).